The following is a 263-amino-acid chain: HTH-type transcriptional repressor NanR (263 aa).

The segment at 1-25 (MDVMNAFDSQAEDSPTSLGRSLRRR) is disordered. One can recognise an HTH gntR-type domain in the interval 30 to 98 (KKLSEMVEEE…NGERARVSRP (69 aa)). Positions 58–77 (ERELMAFFNVGRPSVREALA) form a DNA-binding region, H-T-H motif.

Belongs to the NanR family.

Transcriptional repressor that controls expression of the genes required for the catabolism of sialic acids. The protein is HTH-type transcriptional repressor NanR of Salmonella choleraesuis (strain SC-B67).